We begin with the raw amino-acid sequence, 420 residues long: COP9 signalosome complex subunit 5 (420 aa).

Positions 73–208 (AALSALACMK…IGAFRTMPET (136 aa)) constitute an MPN domain. Zn(2+) is bound by residues H154, H156, and D167. The JAMM motif motif lies at 154 to 167 (HSHPGYGCWLSGID).

This sequence belongs to the peptidase M67A family. CSN5 subfamily. Component of the COP9 signalosome (CSN) complex.

It localises to the cytoplasm. The protein resides in the nucleus. Its function is as follows. Catalytic component of the COP9 signalosome (CSN) complex that acts as an regulator of the ubiquitin (Ubl) conjugation pathway by mediating the deneddylation of the cullin subunit of SCF-type E3 ubiquitin-protein ligase complexes. The CSN complex is involved in the regulation of the mating pheromone response. This is COP9 signalosome complex subunit 5 (RRI1) from Eremothecium gossypii (strain ATCC 10895 / CBS 109.51 / FGSC 9923 / NRRL Y-1056) (Yeast).